The sequence spans 699 residues: Kinesin-II 85 kDa subunit (699 aa).

In terms of domain architecture, Kinesin motor spans 10-342 (NVRVVVRCRP…LRYANRAKNI (333 aa)). ATP is bound at residue 97 to 104 (GQTGTGKT). A coiled-coil region spans residues 341-619 (NIKNKAKINE…EDIGEWQLKC (279 aa)). 3 disordered regions span residues 369–415 (KQIS…LSPE), 432–456 (EEKK…ESEL), and 660–699 (GMKY…ALLQ). Over residues 376-395 (EGLDDDEESGSEESGDEEAG) the composition is skewed to acidic residues. Residues 400–411 (KKKRKGKNPKRK) are compositionally biased toward basic residues. The segment at 620–699 (VAYTGNNMRK…MASSIDALLQ (80 aa)) is globular. Positions 667–679 (QGKSGRPKTSSGR) are enriched in polar residues.

Belongs to the TRAFAC class myosin-kinesin ATPase superfamily. Kinesin family. Kinesin II subfamily. As to quaternary structure, heterotrimer of a 115 kDa subunit (KAP115) and two kinesin-like subunits of 95 kDa (KRP95) and 85 kDa (KRP85). Post-translationally, the N-terminus is blocked.

It localises to the cytoplasm. Its subcellular location is the cytoskeleton. The sequence is that of Kinesin-II 85 kDa subunit (KRP85) from Strongylocentrotus purpuratus (Purple sea urchin).